Here is a 402-residue protein sequence, read N- to C-terminus: Sulfate adenylyltransferase (402 aa).

The protein belongs to the sulfate adenylyltransferase family.

It catalyses the reaction sulfate + ATP + H(+) = adenosine 5'-phosphosulfate + diphosphate. The protein operates within sulfur metabolism; hydrogen sulfide biosynthesis; sulfite from sulfate: step 1/3. The polypeptide is Sulfate adenylyltransferase (Vesicomyosocius okutanii subsp. Calyptogena okutanii (strain HA)).